We begin with the raw amino-acid sequence, 155 residues long: MTEAAEATLSADIQLIQRIIPHRYPFLLVDRVRDIVPNQSAVGIKCVTMNEPQFTGHFPGLPIFPGVQIIEAMAQTAAVLVGVSLDLADKGAKVYFMGIDGAKFRRKVVPGDVLEMTVTVKRGGGKVWKFEGRASVDGELAAEAEFAAMLDIPKG.

His57 is a catalytic residue.

The protein belongs to the thioester dehydratase family. FabZ subfamily.

It is found in the cytoplasm. The catalysed reaction is a (3R)-hydroxyacyl-[ACP] = a (2E)-enoyl-[ACP] + H2O. In terms of biological role, involved in unsaturated fatty acids biosynthesis. Catalyzes the dehydration of short chain beta-hydroxyacyl-ACPs and long chain saturated and unsaturated beta-hydroxyacyl-ACPs. The chain is 3-hydroxyacyl-[acyl-carrier-protein] dehydratase FabZ from Cereibacter sphaeroides (strain ATCC 17025 / ATH 2.4.3) (Rhodobacter sphaeroides).